The primary structure comprises 493 residues: Galactose-1-phosphate uridylyltransferase (493 aa).

Belongs to the galactose-1-phosphate uridylyltransferase type 2 family.

It localises to the cytoplasm. The enzyme catalyses alpha-D-galactose 1-phosphate + UDP-alpha-D-glucose = alpha-D-glucose 1-phosphate + UDP-alpha-D-galactose. Its pathway is carbohydrate metabolism; galactose metabolism. The sequence is that of Galactose-1-phosphate uridylyltransferase from Streptococcus thermophilus (strain ATCC BAA-250 / LMG 18311).